A 1794-amino-acid polypeptide reads, in one-letter code: Non-reducing polyketide synthase nscA (1794 aa).

Residues Asp19–His256 are N-terminal acylcarrier protein transacylase domain (SAT). The Ketosynthase family 3 (KS3) domain occupies Ala389–Asp822. Residues Pro427–Thr448 are disordered. The segment covering Asp428–Gly440 has biased composition (basic and acidic residues). Residues Cys562, His697, and His740 each act as for beta-ketoacyl synthase activity in the active site. The interval Phe928 to Thr1249 is malonyl-CoA:ACP transacylase (MAT) domain. The interval Thr1314–Pro1633 is product template (PT) domain. An N-terminal hotdog fold region spans residues His1318–Ala1454. Positions His1318–Asp1628 constitute a PKS/mFAS DH domain. His1350 acts as the Proton acceptor; for dehydratase activity in catalysis. The C-terminal hotdog fold stretch occupies residues Ala1482–Asp1628. Asp1539 acts as the Proton donor; for dehydratase activity in catalysis. 2 disordered regions span residues Ser1637–Ala1665 and Ala1682–Val1718. Polar residues-rich tracts occupy residues Gln1644–Lys1655 and Ser1685–Pro1701. The region spanning Pro1717–Cys1794 is the Carrier domain. Ser1754 is modified (O-(pantetheine 4'-phosphoryl)serine).

Pantetheine 4'-phosphate serves as cofactor.

It functions in the pathway secondary metabolite biosynthesis. Non-reducing polyketide synthase; part of the gene cluster that mediates the biosynthesis of neosartoricin, a prenylated anthracenone that exhibits T-cell antiproliferative activity, suggestive of a physiological role as an immunosuppressive agent. The non-reducing polyketide synthase nscA probably synthesizes and cyclizes the decaketide backbone. The hydrolase nscB then mediates the product release through hydrolysis followed by spontaneous decarboxylation. The prenyltransferase nscD catalyzes the addition of the dimethylallyl group to the aromatic C5. The FAD-dependent monooxygenase nscC is then responsible for the stereospecific hydroxylation at C2. There is no gene encoding O-acetyltransferase in the nsc gene cluster; thus, the last step of 2-O-acetylation leading to neosartoricin may be catalyzed by an unidentified O-acetyltransferase. The polypeptide is Non-reducing polyketide synthase nscA (Neosartorya fischeri (strain ATCC 1020 / DSM 3700 / CBS 544.65 / FGSC A1164 / JCM 1740 / NRRL 181 / WB 181) (Aspergillus fischerianus)).